The primary structure comprises 327 residues: DNA-directed RNA polymerase subunit alpha (327 aa).

An alpha N-terminal domain (alpha-NTD) region spans residues 1-243; it reads MEKFLKYEIK…EHLNPIVNVN (243 aa). Residues 260–327 form an alpha C-terminal domain (alpha-CTD) region; that stretch reads RVRSFAKQIE…VHELGLKLRS (68 aa).

This sequence belongs to the RNA polymerase alpha chain family. As to quaternary structure, homodimer. The RNAP catalytic core consists of 2 alpha, 1 beta, 1 beta' and 1 omega subunit. When a sigma factor is associated with the core the holoenzyme is formed, which can initiate transcription.

The enzyme catalyses RNA(n) + a ribonucleoside 5'-triphosphate = RNA(n+1) + diphosphate. In terms of biological role, DNA-dependent RNA polymerase catalyzes the transcription of DNA into RNA using the four ribonucleoside triphosphates as substrates. This chain is DNA-directed RNA polymerase subunit alpha, found in Mycoplasma pneumoniae (strain ATCC 29342 / M129 / Subtype 1) (Mycoplasmoides pneumoniae).